A 290-amino-acid polypeptide reads, in one-letter code: NAD kinase (290 aa).

The active-site Proton acceptor is the Asp75. NAD(+)-binding positions include Asp75–Gly76, Asn148–Glu149, Asp178, Thr189–Ser194, and Gln247.

Belongs to the NAD kinase family. A divalent metal cation serves as cofactor.

It is found in the cytoplasm. It carries out the reaction NAD(+) + ATP = ADP + NADP(+) + H(+). In terms of biological role, involved in the regulation of the intracellular balance of NAD and NADP, and is a key enzyme in the biosynthesis of NADP. Catalyzes specifically the phosphorylation on 2'-hydroxyl of the adenosine moiety of NAD to yield NADP. The sequence is that of NAD kinase from Wolinella succinogenes (strain ATCC 29543 / DSM 1740 / CCUG 13145 / JCM 31913 / LMG 7466 / NCTC 11488 / FDC 602W) (Vibrio succinogenes).